Reading from the N-terminus, the 274-residue chain is Protein STAY-GREEN, chloroplastic (274 aa).

The transit peptide at 1–48 (MAAATSTMSLLPPITQQQRWHAADSLVVLASRCHNSRRRRRCRYVVPR) directs the protein to the chloroplast.

It belongs to the staygreen family. In terms of assembly, interacts with LHCII complex. As to expression, expressed in leaves, roots and developing seeds.

It is found in the plastid. The protein localises to the chloroplast membrane. The protein resides in the chloroplast stroma. Functionally, involved in the disassembling mechanism of the intact light-harvesting complex of photosystem II (LHCII) in the thylakoid membranes. Required to trigger chlorophyll degradation during natural and dark-induced leaf senescence. This chain is Protein STAY-GREEN, chloroplastic (SGR), found in Oryza sativa subsp. japonica (Rice).